Reading from the N-terminus, the 176-residue chain is Deoxyuridine 5'-triphosphate nucleotidohydrolase (176 aa).

Residues 67–69 (RSG), Asn80, 84–86 (TVD), and Lys94 each bind substrate. A disordered region spans residues 141–176 (GGFGSTGGHASVDGAEGGITHGGNSYASVVSDREGQ).

The protein belongs to the dUTPase family. Mg(2+) serves as cofactor.

It catalyses the reaction dUTP + H2O = dUMP + diphosphate + H(+). Its pathway is pyrimidine metabolism; dUMP biosynthesis; dUMP from dCTP (dUTP route): step 2/2. Functionally, this enzyme is involved in nucleotide metabolism: it produces dUMP, the immediate precursor of thymidine nucleotides and it decreases the intracellular concentration of dUTP so that uracil cannot be incorporated into DNA. This Streptomyces griseus subsp. griseus (strain JCM 4626 / CBS 651.72 / NBRC 13350 / KCC S-0626 / ISP 5235) protein is Deoxyuridine 5'-triphosphate nucleotidohydrolase.